The primary structure comprises 449 residues: Bifunctional protein GlmU (449 aa).

Residues 1-225 (MLSVAILAAG…NGELQGINNR (225 aa)) form a pyrophosphorylase region. Residues 7 to 10 (LAAG), Lys21, Gln73, and 78 to 79 (GT) contribute to the UDP-N-acetyl-alpha-D-glucosamine site. Asp103 is a binding site for Mg(2+). UDP-N-acetyl-alpha-D-glucosamine contacts are provided by Gly140, Glu154, Asn169, and Asn223. Asn223 is a Mg(2+) binding site. Residues 226-246 (IHLSECEECIQNSIKEKHMLN) form a linker region. The tract at residues 247-449 (GVTFINKASC…NIENWKKKKS (203 aa)) is N-acetyltransferase. Residues Arg328 and Lys346 each contribute to the UDP-N-acetyl-alpha-D-glucosamine site. The active-site Proton acceptor is the His358. UDP-N-acetyl-alpha-D-glucosamine contacts are provided by Tyr361 and Asn372. Positions 375, 418, and 435 each coordinate acetyl-CoA.

In the N-terminal section; belongs to the N-acetylglucosamine-1-phosphate uridyltransferase family. This sequence in the C-terminal section; belongs to the transferase hexapeptide repeat family. As to quaternary structure, homotrimer. Mg(2+) is required as a cofactor.

The protein localises to the cytoplasm. It catalyses the reaction alpha-D-glucosamine 1-phosphate + acetyl-CoA = N-acetyl-alpha-D-glucosamine 1-phosphate + CoA + H(+). The enzyme catalyses N-acetyl-alpha-D-glucosamine 1-phosphate + UTP + H(+) = UDP-N-acetyl-alpha-D-glucosamine + diphosphate. The protein operates within nucleotide-sugar biosynthesis; UDP-N-acetyl-alpha-D-glucosamine biosynthesis; N-acetyl-alpha-D-glucosamine 1-phosphate from alpha-D-glucosamine 6-phosphate (route II): step 2/2. It participates in nucleotide-sugar biosynthesis; UDP-N-acetyl-alpha-D-glucosamine biosynthesis; UDP-N-acetyl-alpha-D-glucosamine from N-acetyl-alpha-D-glucosamine 1-phosphate: step 1/1. Its pathway is bacterial outer membrane biogenesis; LPS lipid A biosynthesis. In terms of biological role, catalyzes the last two sequential reactions in the de novo biosynthetic pathway for UDP-N-acetylglucosamine (UDP-GlcNAc). The C-terminal domain catalyzes the transfer of acetyl group from acetyl coenzyme A to glucosamine-1-phosphate (GlcN-1-P) to produce N-acetylglucosamine-1-phosphate (GlcNAc-1-P), which is converted into UDP-GlcNAc by the transfer of uridine 5-monophosphate (from uridine 5-triphosphate), a reaction catalyzed by the N-terminal domain. The protein is Bifunctional protein GlmU of Prochlorococcus marinus (strain AS9601).